The following is a 417-amino-acid chain: UDP-N-acetylglucosamine 1-carboxyvinyltransferase (417 aa).

Residue 22–23 participates in phosphoenolpyruvate binding; sequence KN. R92 is a binding site for UDP-N-acetyl-alpha-D-glucosamine. C116 serves as the catalytic Proton donor. C116 carries the post-translational modification 2-(S-cysteinyl)pyruvic acid O-phosphothioketal. The UDP-N-acetyl-alpha-D-glucosamine site is built by D304 and V326.

Belongs to the EPSP synthase family. MurA subfamily.

It is found in the cytoplasm. It catalyses the reaction phosphoenolpyruvate + UDP-N-acetyl-alpha-D-glucosamine = UDP-N-acetyl-3-O-(1-carboxyvinyl)-alpha-D-glucosamine + phosphate. It functions in the pathway cell wall biogenesis; peptidoglycan biosynthesis. Functionally, cell wall formation. Adds enolpyruvyl to UDP-N-acetylglucosamine. In Syntrophotalea carbinolica (strain DSM 2380 / NBRC 103641 / GraBd1) (Pelobacter carbinolicus), this protein is UDP-N-acetylglucosamine 1-carboxyvinyltransferase.